Here is a 103-residue protein sequence, read N- to C-terminus: Co-chaperonin GroES (103 aa).

A disordered region spans residues G31–V67.

This sequence belongs to the GroES chaperonin family. Heptamer of 7 subunits arranged in a ring. Interacts with the chaperonin GroEL.

It is found in the cytoplasm. Its function is as follows. Together with the chaperonin GroEL, plays an essential role in assisting protein folding. The GroEL-GroES system forms a nano-cage that allows encapsulation of the non-native substrate proteins and provides a physical environment optimized to promote and accelerate protein folding. GroES binds to the apical surface of the GroEL ring, thereby capping the opening of the GroEL channel. The chain is Co-chaperonin GroES from Prochlorococcus marinus (strain NATL2A).